Consider the following 458-residue polypeptide: MYQGPPQPPPQAVPMPYIVNNNTPPYPNGNINFPPTAQQNIPPTVYPQQVPFPGQPQGGQFPQPSSEQQVFNQLPQVTQTFHNSAQNTNATGGPGSGSMPMFTPVASFPHPMATAATAAAPLPRSASQASLSMLRVPYHVRKYLSNLAMLKLYEIINEVNTAMGKIGLLSFWTELISDIFTPDAVIRYSKKSMTDYREFEFIIPVFPVICSTLGRFGIVRMEVKVLQLKTQVLSNSTIFFNCPRVTFVYYYPDGSYITHFSQMKGAFDLDLKINWLDVSMHSFVPDIEWNAVERLLSDDTKSTEIEQIFRKLKQEDVKEQGNSFAENNATNVPPNFEAITQLRSYFDVFRNVSVFGTQEGLMRVMQISTVMSTLKNLRKFQIEKNIDSPVTALSAYIDADKKDSGSEPLHAKRRRNSGISPRTTTLGPNGNSNTSNEELPTSDVNDINKDMTKKKMKF.

Residues lysine 401–phenylalanine 458 form a disordered region. The span at serine 417 to asparagine 445 shows a compositional bias: polar residues. Residues aspartate 446–phenylalanine 458 are compositionally biased toward basic and acidic residues.

The protein belongs to the MFG1 family. As to quaternary structure, interacts with FLO8 and MSS11, both morphogenetic transcription factors binding directly to the FLO11 promoter.

The protein localises to the nucleus. In terms of biological role, transcriptional regulator with a general role in all morphogenetically distinct forms of filamentous growth, namely haploid invasive growth, biofilm formation, and diploid pseudohyphal growth. May control FLO11 gene expression as part of a promoter-bound complex with FLO8 and MSS1. The sequence is that of Morphogenetic regulator of filamentous growth protein 1 (MFG1) from Saccharomyces cerevisiae (strain ATCC 204508 / S288c) (Baker's yeast).